We begin with the raw amino-acid sequence, 212 residues long: Ion-translocating oxidoreductase complex subunit G (212 aa).

The chain crosses the membrane as a helical span at residues 9 to 29 (GFLLALFALICTGLVAAVNQQ). T176 carries the FMN phosphoryl threonine modification.

The protein belongs to the RnfG family. The complex is composed of six subunits: RnfA, RnfB, RnfC, RnfD, RnfE and RnfG. The cofactor is FMN.

The protein localises to the cell inner membrane. In terms of biological role, part of a membrane-bound complex that couples electron transfer with translocation of ions across the membrane. This Shewanella baltica (strain OS223) protein is Ion-translocating oxidoreductase complex subunit G.